Here is a 241-residue protein sequence, read N- to C-terminus: MKVLALSALLSLASAASISRRSDFCGQWDTATAGDFILYNDLWGEDNASSGSQCTGVDSASGNEIAWHTSWSWEGGSSDVKSYANAALQFTGTQLSSISSIPSTWKWTYSGSDIVADVAYDMFLGSTADASSDEYEIMVWLAALGGAGPISSTGSTIATPTINGVTWDLYTGPNGDTTVYSFVAQSTTEDFSGDLNDFFTYLVDNEGVSDSLYLTTLEAGTEPFTGSDAELKVSEYSVSIE.

Residues 1 to 15 form the signal peptide; the sequence is MKVLALSALLSLASA. A glycan (N-linked (GlcNAc...) asparagine) is linked at Asn47.

Belongs to the glycosyl hydrolase 12 (cellulase H) family.

Its subcellular location is the secreted. It catalyses the reaction xyloglucan + H2O = xyloglucan oligosaccharides.. Its function is as follows. Catalyzes endohydrolysis of 1,4-beta-D-glucosidic linkages in xyloglucan with retention of the beta-configuration of the glycosyl residues. Specific for xyloglucan and does not hydrolyze other cell wall components. This is Probable xyloglucan-specific endo-beta-1,4-glucanase A (xgeA) from Aspergillus niger (strain ATCC MYA-4892 / CBS 513.88 / FGSC A1513).